The following is a 1045-amino-acid chain: B3 domain-containing protein REM13 (1045 aa).

The TF-B3 1 DNA-binding region spans 7–96; it reads YPQFFHTLVP…VFHVSNLGPN (90 aa). Positions 121 to 147 are disordered; the sequence is NNGDVCDSEELPKEKKAKTNSEEADAV. Residues 130 to 141 show a composition bias toward basic and acidic residues; it reads ELPKEKKAKTNS. 2 consecutive DNA-binding regions (TF-B3) follow at residues 157-253 and 305-398; these read CFMA…FCPT and FVTF…CSPE. The segment at 423–449 is disordered; it reads NRDKISNNDKEENMSWERKKDHLKSRD. Residues 474 to 570 constitute a DNA-binding region (TF-B3 4); it reads SNDSCLVVVS…TPVLSLCPAD (97 aa). Positions 606–625 are disordered; it reads IKDDNSKEKNDKEESKSVDG. DNA-binding regions (TF-B3) lie at residues 643–738, 815–910, and 940–1035; these read FVTL…LRTE, FVTF…LRTK, and FVTL…LKFS.

The protein localises to the nucleus. This Arabidopsis thaliana (Mouse-ear cress) protein is B3 domain-containing protein REM13 (REM13).